A 221-amino-acid chain; its full sequence is Glycerol metabolism activator (221 aa).

Positions 3–120 constitute a Response regulatory domain; the sequence is KILIADDHPL…QMTDAIEQIL (118 aa). A 4-aspartylphosphate modification is found at Asp-55. The 66-residue stretch at 149–214 folds into the HTH luxR-type domain; it reads APELLQALTR…QAILSAGDID (66 aa). A DNA-binding region (H-T-H motif) is located at residues 173-192; that stretch reads NKQIAYNLDIAETTVKAHVS.

In terms of biological role, positive activator for glycerol metabolism. Regulates the expression of qedA in a positive manner and governs the expression of ADH I and ADH IIB. General regulator of quinoprotein ethanol oxidation and affects expression of ADH IIG activity but is not the sole regulator. This is Glycerol metabolism activator from Pseudomonas putida (Arthrobacter siderocapsulatus).